Here is a 393-residue protein sequence, read N- to C-terminus: Dual-specificity RNA methyltransferase RlmN (393 aa).

The active-site Proton acceptor is Glu114. Residues 120-359 form the Radical SAM core domain; it reads EDDRATLCVS…VIVRKTRGDD (240 aa). Cysteines 127 and 364 form a disulfide. Residues Cys134, Cys138, and Cys141 each contribute to the [4Fe-4S] cluster site. S-adenosyl-L-methionine-binding positions include 188–189, Ser220, 242–244, and Asn321; these read GE and SLH. The S-methylcysteine intermediate role is filled by Cys364.

This sequence belongs to the radical SAM superfamily. RlmN family. The cofactor is [4Fe-4S] cluster.

The protein resides in the cytoplasm. It catalyses the reaction adenosine(2503) in 23S rRNA + 2 reduced [2Fe-2S]-[ferredoxin] + 2 S-adenosyl-L-methionine = 2-methyladenosine(2503) in 23S rRNA + 5'-deoxyadenosine + L-methionine + 2 oxidized [2Fe-2S]-[ferredoxin] + S-adenosyl-L-homocysteine. The enzyme catalyses adenosine(37) in tRNA + 2 reduced [2Fe-2S]-[ferredoxin] + 2 S-adenosyl-L-methionine = 2-methyladenosine(37) in tRNA + 5'-deoxyadenosine + L-methionine + 2 oxidized [2Fe-2S]-[ferredoxin] + S-adenosyl-L-homocysteine. In terms of biological role, specifically methylates position 2 of adenine 2503 in 23S rRNA and position 2 of adenine 37 in tRNAs. m2A2503 modification seems to play a crucial role in the proofreading step occurring at the peptidyl transferase center and thus would serve to optimize ribosomal fidelity. This chain is Dual-specificity RNA methyltransferase RlmN, found in Actinobacillus pleuropneumoniae serotype 5b (strain L20).